The sequence spans 326 residues: MKSEEKIKLVSIVGPTASGKTELAVRLAERFDGEIVNADSMQVYRGMDIGTAKPSVSLRSRVTHHLIDIVTPDVNFSASDFRRAADGAIADIHSRGKRVFIVGGTGLYIRALLQGLVDSPSGDEQIRGELNELAKEIGNEGLLQLLAEVDPITAERLHHNDRVRIIRALEVYRQTGRPMSQFRQEHGFAEEMYDCLMLGINVERQELYSRVEKRVDEMVESGLAAEVEELFRLGYARDLKAMRSIGYKEICSFLSGEISLDQAVQLIKRDTRRYAKRQMTWFNKEYGIKWVEYPAAFANICNHVIEFFERGEDHAKSTFQHPGSVP.

14–21 serves as a coordination point for ATP; the sequence is GPTASGKT. Position 16 to 21 (16 to 21) interacts with substrate; that stretch reads TASGKT. The tract at residues 39 to 42 is interaction with substrate tRNA; it reads DSMQ.

It belongs to the IPP transferase family. In terms of assembly, monomer. Requires Mg(2+) as cofactor.

It carries out the reaction adenosine(37) in tRNA + dimethylallyl diphosphate = N(6)-dimethylallyladenosine(37) in tRNA + diphosphate. Its function is as follows. Catalyzes the transfer of a dimethylallyl group onto the adenine at position 37 in tRNAs that read codons beginning with uridine, leading to the formation of N6-(dimethylallyl)adenosine (i(6)A). The polypeptide is tRNA dimethylallyltransferase 2 (Geotalea daltonii (strain DSM 22248 / JCM 15807 / FRC-32) (Geobacter daltonii)).